The following is a 315-amino-acid chain: Olfactory receptor 5P59 (315 aa).

Residues 1 to 28 are Extracellular-facing; sequence MAFLQDGNHTAVTEFILLGLTDDPVLRV. Residue Asn-8 is glycosylated (N-linked (GlcNAc...) asparagine). A helical membrane pass occupies residues 29 to 49; that stretch reads VLFTIILCIYLVTVFGNLSTI. Over 50–57 the chain is Cytoplasmic; that stretch reads LLIRVSSQ. The chain crosses the membrane as a helical span at residues 58–78; sequence LHHPMYFFLSHLASVDIGISS. Residues 79-102 are Extracellular-facing; sequence SVTPSMLVNFLLERSTISYLGCGI. Cys-100 and Cys-193 are oxidised to a cystine. A helical membrane pass occupies residues 103–123; the sequence is QLGSADFIASVECFLLAAMAY. Residues 124–136 are Cytoplasmic-facing; that stretch reads DRFMAVCNPLLYS. A helical transmembrane segment spans residues 137-157; that stretch reads TKMSTQVCVQLVVGSYIGGFL. Residues 158 to 200 are Extracellular-facing; that stretch reads NASLIVTVYFFSFLFCGPNRIDHFFCDFAPLAELSCSDVSVSV. The chain crosses the membrane as a helical span at residues 201–221; that stretch reads LIISFSAGSVTMITVFVIVIS. Residues 222–241 are Cytoplasmic-facing; sequence YSYILITILKMHSTEGRHKA. The chain crosses the membrane as a helical span at residues 242-262; sequence FSTCTSHLTAVTLYYGTITFI. Residues 263 to 275 are Extracellular-facing; sequence YVMPKSSFSTDQN. A helical membrane pass occupies residues 276-296; it reads KVVSVFYMVMIPMLNPLIYSL. The Cytoplasmic portion of the chain corresponds to 297-315; it reads SNNEIKGALKRQLGMKTLS.

The protein belongs to the G-protein coupled receptor 1 family.

It localises to the cell membrane. Potential odorant receptor. The chain is Olfactory receptor 5P59 from Mus musculus (Mouse).